A 394-amino-acid polypeptide reads, in one-letter code: S-adenosylmethionine synthase (394 aa).

His-16 is a binding site for ATP. Asp-18 lines the Mg(2+) pocket. Residue Glu-44 coordinates K(+). 2 residues coordinate L-methionine: Glu-57 and Gln-100. The tract at residues 100–110 is flexible loop; that stretch reads QSPDIAQGVDA. ATP-binding positions include 172–174, 239–240, Asp-248, 254–255, Ala-271, and Lys-275; these read DAK, RF, and RK. Asp-248 serves as a coordination point for L-methionine. An L-methionine-binding site is contributed by Lys-279.

The protein belongs to the AdoMet synthase family. As to quaternary structure, homotetramer; dimer of dimers. Mg(2+) serves as cofactor. Requires K(+) as cofactor.

The protein localises to the cytoplasm. It carries out the reaction L-methionine + ATP + H2O = S-adenosyl-L-methionine + phosphate + diphosphate. It functions in the pathway amino-acid biosynthesis; S-adenosyl-L-methionine biosynthesis; S-adenosyl-L-methionine from L-methionine: step 1/1. Catalyzes the formation of S-adenosylmethionine (AdoMet) from methionine and ATP. The overall synthetic reaction is composed of two sequential steps, AdoMet formation and the subsequent tripolyphosphate hydrolysis which occurs prior to release of AdoMet from the enzyme. This chain is S-adenosylmethionine synthase, found in Enterococcus faecalis (strain ATCC 700802 / V583).